Reading from the N-terminus, the 293-residue chain is 4-hydroxy-tetrahydrodipicolinate synthase (293 aa).

Thr47 contributes to the pyruvate binding site. The active-site Proton donor/acceptor is Tyr135. The Schiff-base intermediate with substrate role is filled by Lys163. Pyruvate is bound at residue Val205.

It belongs to the DapA family. As to quaternary structure, homotetramer; dimer of dimers.

The protein localises to the cytoplasm. The catalysed reaction is L-aspartate 4-semialdehyde + pyruvate = (2S,4S)-4-hydroxy-2,3,4,5-tetrahydrodipicolinate + H2O + H(+). It functions in the pathway amino-acid biosynthesis; L-lysine biosynthesis via DAP pathway; (S)-tetrahydrodipicolinate from L-aspartate: step 3/4. Catalyzes the condensation of (S)-aspartate-beta-semialdehyde [(S)-ASA] and pyruvate to 4-hydroxy-tetrahydrodipicolinate (HTPA). This chain is 4-hydroxy-tetrahydrodipicolinate synthase, found in Methylibium petroleiphilum (strain ATCC BAA-1232 / LMG 22953 / PM1).